The primary structure comprises 85 residues: MLTPLFAIAPATVTWSPKVALVMIVCNVIAIAVGKATIKHPSEGAKLPNAAFFGGMGHAALLGTTSLGHIIGIGAIQGLAARGVL.

2 helical membrane passes run Thr-12–Gly-34 and Gly-54–Ile-76.

Belongs to the PsaG/PsaK family.

The protein resides in the cellular thylakoid membrane. In Parasynechococcus marenigrum (strain WH8102), this protein is Photosystem I reaction center subunit PsaK.